The following is a 173-amino-acid chain: uncharacterized protein (173 aa).

One can recognise an MSP domain in the interval 16–133; the sequence is DLVLRPETIT…KHVLIRFPNK (118 aa). Residues 141 to 163 are compositionally biased toward basic and acidic residues; that stretch reads KKMEEDDMKQQKERNKLSNEKMG. The disordered stretch occupies residues 141 to 173; that stretch reads KKMEEDDMKQQKERNKLSNEKMGIRNQNMGEKK.

This is an uncharacterized protein from Caenorhabditis elegans.